Here is a 165-residue protein sequence, read N- to C-terminus: Probable chemoreceptor glutamine deamidase CheD (165 aa).

This sequence belongs to the CheD family.

It carries out the reaction L-glutaminyl-[protein] + H2O = L-glutamyl-[protein] + NH4(+). In terms of biological role, probably deamidates glutamine residues to glutamate on methyl-accepting chemotaxis receptors (MCPs), playing an important role in chemotaxis. This Symbiobacterium thermophilum (strain DSM 24528 / JCM 14929 / IAM 14863 / T) protein is Probable chemoreceptor glutamine deamidase CheD.